A 146-amino-acid chain; its full sequence is Cystatin-C (146 aa).

An N-terminal signal peptide occupies residues 1–26 (MAGPLRAPLLLLAILAVALAVSPAAG). S43 carries the phosphoserine modification. Positions 81-85 (QIVAG) match the Secondary area of contact motif. 2 cysteine pairs are disulfide-bonded: C99–C109 and C123–C143.

The protein belongs to the cystatin family.

The protein localises to the secreted. As an inhibitor of cysteine proteinases, this protein is thought to serve an important physiological role as a local regulator of this enzyme activity. In Macaca mulatta (Rhesus macaque), this protein is Cystatin-C (CST3).